Here is a 302-residue protein sequence, read N- to C-terminus: Deoxyribonuclease-1-like 1 (302 aa).

Positions 1 to 18 (MHYPTALLFLILVNGAQA) are cleaved as a signal peptide. Residues Glu-97 and His-148 contribute to the active site. The cysteines at positions 187 and 224 are disulfide-linked. N-linked (GlcNAc...) asparagine glycosylation is present at Asn-261.

Belongs to the DNase I family.

The protein resides in the endoplasmic reticulum. This is Deoxyribonuclease-1-like 1 (DNASE1L1) from Chlorocebus aethiops (Green monkey).